Here is a 535-residue protein sequence, read N- to C-terminus: Cytochrome P450 71C3 (535 aa).

Residues 23–43 (QTLTLLLIAVPTVLLLLASLA) traverse the membrane as a helical segment. Residue C475 coordinates heme.

It belongs to the cytochrome P450 family. The cofactor is heme.

The protein localises to the membrane. The protein operates within secondary metabolite biosynthesis; 2,4-dihydroxy-1,4-benzoxazin-3-one biosynthesis; 2,4-dihydroxy-1,4-benzoxazin-3-one from indoleglycerol phosphate: step 5/5. Catalyzes the conversion of 2-hydroxy-1,4-benzoxazin-3-one (HBOA) to 2,4-dihydroxy-1,4-benzoxazin-3-one (DIBOA). The protein is Cytochrome P450 71C3 (CYP71C3) of Zea mays (Maize).